The chain runs to 185 residues: Pericyclase pydY (185 aa).

The protein belongs to the pericyclase pydY family.

Its pathway is mycotoxin biosynthesis. Functionally, pericyclase; part of the gene cluster that mediates the biosynthesis of pyrrocidines, fungal natural products containing a macrocyclic para-cyclophane connected to a decahydrofluorene ring system that show potent antibiotic activities toward Gram-negative bacteria. Within the pathway, pydY is involved in the late Diels-Alder cycloaddition step that leads to the formation of the decahydrofluorene core. The pathway begins with the PKS-NRPS pydA which, with the help of the trans-enoyl reductase pydC, synthesizes the polyketide-tyrosyl acyl thioester product which can be reductively off-loaded by the terminal reductase (R) domain in pydA. The alpha/beta hydrolase pydG is then required to catalyze the subsequent Knoevenagel condensation that affords the 3-pyrrolin-2-one ring, whereas the four proteins pydB, pydE, pydX and pydZ then function synergistically to form the cyclophane. PydB and the membrane-bound pydX and pydZ are lipid-binding proteins that can sequester and mold the pdyG product into the inverse S-shape. Binding of the medium chain reductase pydE to the complex would trigger the cascade oxidative cyclization. PydY is involved in the Diels-Alder cycloaddition that forms the decahydrofluorene core. Additional non-enzymatic hydroxylation yields pyrrocidine A2 which can be further reduced into pyrrocidine B by an endogenous reductase. In Acremonium sp, this protein is Pericyclase pydY.